The primary structure comprises 179 residues: Oryzines biosynthesis cluster protein J (179 aa).

In terms of domain architecture, Cupin type-2 spans 88–148; it reads YVDYHPGCEP…NHCWRNPSKT (61 aa).

It belongs to the oryJ family.

Its pathway is secondary metabolite biosynthesis. In terms of biological role, part of the gene cluster that mediates the biosynthesis of oryzines, natural products with an unusual maleidride backbone. The two subunits of the fungal fatty acid synthase oryfasA and oryfasB probably form octenoic acid. This fatty acid is most likely activated by the acyl-CoA ligase oryP to give octenyl-CoA before the citrate synthase-like protein oryE catalyzes condensation with oxaloacetate to form tricarboxylic acid. The next steps of the pathways are conjectural, but a favorite possible route has been proposed, beginning with decarboxylation and concomitant dehydration by the decarboxylase oryM, followed by tautomerization, which may lead to the production of a diene intermediate. Reduction of this diene intermediate could give the known metabolite piliformic acid. On the pathway to oryzine B and oryzine A, however, hydroxylation of the diene by the alpha-ketoglutarate-dependent dioxygenase oryG and lactonisation by the lactonohydrolases oryH or oryL could give oryzine B directly. Finally, enoyl reduction by the dehydrogenase oryD would then convert oryzine B into oryzine A. The chain is Oryzines biosynthesis cluster protein J from Aspergillus oryzae (strain ATCC 42149 / RIB 40) (Yellow koji mold).